Consider the following 583-residue polypeptide: Pre-mRNA-processing protein PRP40 (583 aa).

2 WW domains span residues 1 to 31 and 42 to 72; these read MSIW…KPKE and ENGW…IPAF. 6 consecutive FF domains span residues 132–188, 201–257, 262–332, 354–413, 427–488, and 491–552; these read KEEA…YLSN, TSKF…YIDT, QKES…YLKI, RDRI…FVDE, QTLI…KLQN, and RILE…FKPE. Residue T576 is modified to Phosphothreonine.

The protein belongs to the PRPF40 family. In terms of assembly, interacts with CRM1, MSL5, PRP8, and the RNA polymerase II largest subunit (RPB1). MSL5, MUD2 and PRP40 interact to form the commitment complex 2 (CC2), a precursor of mature spliceosomes.

The protein localises to the nucleus. In terms of biological role, required for pre-spliceosome formation, which is the first step of pre-mRNA splicing. This protein is associated with snRNP U1. Two commitment complexes, CC1 and CC2, have been defined in yeast. CC1 is a basal complex dependent only on the 5' splice site. CC2 is a complex of lower mobility and is dependent on a branchpoint as well as a 5' splice site region. This protein is involved in CC2 formation where it binds to the branchpoint binding protein MSL5, bridging the U1 snRNP-associated 5' splice site and the MSL5-associated branch point 3' intron splice site. The chain is Pre-mRNA-processing protein PRP40 (PRP40) from Saccharomyces cerevisiae (strain ATCC 204508 / S288c) (Baker's yeast).